Consider the following 374-residue polypeptide: tRNA-specific 2-thiouridylase MnmA (374 aa).

ATP is bound by residues 12–19 (GMSGGVDS) and M38. The interaction with target base in tRNA stretch occupies residues 98–100 (NPD). C103 acts as the Nucleophile in catalysis. C103 and C200 are oxidised to a cystine. G127 provides a ligand contact to ATP. The tract at residues 150–152 (KDQ) is interaction with tRNA. C200 functions as the Cysteine persulfide intermediate in the catalytic mechanism. Residues 311-312 (RY) are interaction with tRNA.

This sequence belongs to the MnmA/TRMU family.

Its subcellular location is the cytoplasm. It carries out the reaction S-sulfanyl-L-cysteinyl-[protein] + uridine(34) in tRNA + AH2 + ATP = 2-thiouridine(34) in tRNA + L-cysteinyl-[protein] + A + AMP + diphosphate + H(+). Catalyzes the 2-thiolation of uridine at the wobble position (U34) of tRNA, leading to the formation of s(2)U34. In Lactiplantibacillus plantarum (strain ATCC BAA-793 / NCIMB 8826 / WCFS1) (Lactobacillus plantarum), this protein is tRNA-specific 2-thiouridylase MnmA.